Reading from the N-terminus, the 304-residue chain is Protoheme IX farnesyltransferase 1 (304 aa).

The next 8 helical transmembrane spans lie at 24–44, 47–67, 99–119, 122–142, 150–170, 176–196, 228–248, and 280–300; these read VVVL…KAPL, FVPW…AGAA, MALG…LAFT, LTAW…TGFL, IVIG…AITG, PLLL…ALCI, LVLF…LVYL, and YSIV…YLPL.

The protein belongs to the UbiA prenyltransferase family. Protoheme IX farnesyltransferase subfamily.

It is found in the cell inner membrane. It carries out the reaction heme b + (2E,6E)-farnesyl diphosphate + H2O = Fe(II)-heme o + diphosphate. The protein operates within porphyrin-containing compound metabolism; heme O biosynthesis; heme O from protoheme: step 1/1. Its function is as follows. Converts heme B (protoheme IX) to heme O by substitution of the vinyl group on carbon 2 of heme B porphyrin ring with a hydroxyethyl farnesyl side group. The sequence is that of Protoheme IX farnesyltransferase 1 from Pseudomonas paraeruginosa (strain DSM 24068 / PA7) (Pseudomonas aeruginosa (strain PA7)).